Consider the following 116-residue polypeptide: MSNIIKQLEEEQLKQNVPSFRPGDTLEVKVWVVEGAKRRLQAFEGVVIAIRNRGLHSAFTLRKVSNGTGVERVFQTHSPVIDSITVKRKGAVRKAKLYYLRERSGKSARIKERLGA.

The protein belongs to the bacterial ribosomal protein bL19 family.

This protein is located at the 30S-50S ribosomal subunit interface and may play a role in the structure and function of the aminoacyl-tRNA binding site. The chain is Large ribosomal subunit protein bL19 from Actinobacillus succinogenes (strain ATCC 55618 / DSM 22257 / CCUG 43843 / 130Z).